Consider the following 504-residue polypeptide: Maturase K (504 aa).

Belongs to the intron maturase 2 family. MatK subfamily.

It localises to the plastid. Its subcellular location is the chloroplast. Usually encoded in the trnK tRNA gene intron. Probably assists in splicing its own and other chloroplast group II introns. The polypeptide is Maturase K (Prionotes cerinthoides (Climbing heath)).